The primary structure comprises 106 residues: Ig kappa chain C region, A allele (106 aa).

The Ig-like domain occupies 5–102 (PTVSIFPPSM…SSSPVVKSFN (98 aa)). A disulfide bridge links Cys26 with Cys86.

In Rattus norvegicus (Rat), this protein is Ig kappa chain C region, A allele.